We begin with the raw amino-acid sequence, 111 residues long: Ribonuclease P protein component (111 aa).

Belongs to the RnpA family. Consists of a catalytic RNA component (M1 or rnpB) and a protein subunit.

The enzyme catalyses Endonucleolytic cleavage of RNA, removing 5'-extranucleotides from tRNA precursor.. RNaseP catalyzes the removal of the 5'-leader sequence from pre-tRNA to produce the mature 5'-terminus. It can also cleave other RNA substrates such as 4.5S RNA. The protein component plays an auxiliary but essential role in vivo by binding to the 5'-leader sequence and broadening the substrate specificity of the ribozyme. The polypeptide is Ribonuclease P protein component (Clostridium botulinum (strain 657 / Type Ba4)).